The chain runs to 394 residues: Bone morphogenetic protein 2 (394 aa).

Positions 1 to 19 (MVAGTRCLLVLLLPQVLLG) are cleaved as a signal peptide. A propeptide spans 20–280 (GAAGLIPELG…GHPLHKREKR (261 aa)) (cleaved by PCSK5). Ser86 is subject to Phosphoserine. Residues Asn134, Asn162, and Asn198 are each glycosylated (N-linked (GlcNAc...) asparagine). A disordered region spans residues 269–291 (GKGHPLHKREKRQAKHKQRKRLK). Over residues 272 to 291 (HPLHKREKRQAKHKQRKRLK) the composition is skewed to basic residues. Intrachain disulfides connect Cys294–Cys359, Cys323–Cys391, and Cys327–Cys393. Asn336 carries an N-linked (GlcNAc...) asparagine glycan.

It belongs to the TGF-beta family. Homodimer; disulfide-linked. Interacts with SOSTDC1. Interacts with GREM2, RGMA, RGMB and RGMC. Interacts with ASPN. Interacts with MAFP5. Interacts with FBN1 (via N-terminal domain) and FBN2. Interacts with type I receptor BMPR1A. Interacts with type II receptor BMPR2. Interacts with SCUBE3. Interacts with TNFAIP6 (primarily via Link domain); this interaction is inhibited by hyaluronan. Interacts with ERFE. Interacts with BMPR1A/ALK3; the interaction may induce HAMP expression. Forms heterodimers with BMP6 in vitro; the heterodimer then binds to its receptor BMPR1A /ALK3 and may induce HAMP expression. Interacts with TGFBR3.

The protein localises to the secreted. Its function is as follows. Growth factor of the TGF-beta superfamily that plays essential roles in many developmental processes, including cardiogenesis, neurogenesis, and osteogenesis. Induces cartilage and bone formation. Initiates the canonical BMP signaling cascade by associating with type I receptor BMPR1A and type II receptor BMPR2. Once all three components are bound together in a complex at the cell surface, BMPR2 phosphorylates and activates BMPR1A. In turn, BMPR1A propagates signal by phosphorylating SMAD1/5/8 that travel to the nucleus and act as activators and repressors of transcription of target genes. Also acts to promote expression of HAMP, via the interaction with its receptor BMPR1A/ALK3. Can also signal through non-canonical pathways such as ERK/MAP kinase signaling cascade that regulates osteoblast differentiation. Also stimulates the differentiation of myoblasts into osteoblasts via the EIF2AK3-EIF2A-ATF4 pathway by stimulating EIF2A phosphorylation which leads to increased expression of ATF4 which plays a central role in osteoblast differentiation. Acts as a positive regulator of odontoblast differentiation during mesenchymal tooth germ formation, expression is repressed during the bell stage by MSX1-mediated inhibition of CTNNB1 signaling. The protein is Bone morphogenetic protein 2 (Bmp2) of Mus musculus (Mouse).